A 589-amino-acid polypeptide reads, in one-letter code: DNA mismatch repair protein MutL (589 aa).

2 disordered regions span residues 330–355 and 374–394; these read LQRREAPQRPEPARPYTTPPPSSHRE and RIYEQPEPYRPPEPPAASEPT. Over residues 331 to 341 the composition is skewed to basic and acidic residues; the sequence is QRREAPQRPEP. The span at 381 to 390 shows a compositional bias: pro residues; that stretch reads PYRPPEPPAA.

Belongs to the DNA mismatch repair MutL/HexB family.

This protein is involved in the repair of mismatches in DNA. It is required for dam-dependent methyl-directed DNA mismatch repair. May act as a 'molecular matchmaker', a protein that promotes the formation of a stable complex between two or more DNA-binding proteins in an ATP-dependent manner without itself being part of a final effector complex. In Trichlorobacter lovleyi (strain ATCC BAA-1151 / DSM 17278 / SZ) (Geobacter lovleyi), this protein is DNA mismatch repair protein MutL.